Reading from the N-terminus, the 263-residue chain is 4-hydroxy-2-oxo-heptane-1,7-dioate aldolase (263 aa).

His45 serves as the catalytic Proton acceptor. A substrate-binding site is contributed by Gln147. A divalent metal cation is bound at residue Glu149. The substrate site is built by Ala174 and Asp175. Asp175 is an a divalent metal cation binding site.

It belongs to the HpcH/HpaI aldolase family. As to quaternary structure, homohexamer; trimer of dimers. Requires a divalent metal cation as cofactor.

It carries out the reaction 4-hydroxy-2-oxoheptanedioate = succinate semialdehyde + pyruvate. It participates in aromatic compound metabolism; 4-hydroxyphenylacetate degradation; pyruvate and succinate semialdehyde from 4-hydroxyphenylacetate: step 7/7. Functionally, catalyzes the reversible retro-aldol cleavage of 4-hydroxy-2-ketoheptane-1,7-dioate (HKHD) to pyruvate and succinic semialdehyde. This is 4-hydroxy-2-oxo-heptane-1,7-dioate aldolase from Salmonella typhimurium (strain LT2 / SGSC1412 / ATCC 700720).